A 564-amino-acid chain; its full sequence is Potassium-transporting ATPase potassium-binding subunit (564 aa).

Transmembrane regions (helical) follow at residues 4–24, 67–87, 135–155, 179–199, 258–278, 286–306, 382–402, 420–440, 487–507, and 534–554; these read YDYL…PWLG, TLAL…VLLL, IGLT…LVAL, LYGL…QGVP, FEVA…GHYV, AIIA…LWSE, AGLY…GLMI, LLVA…AIAA, VMIG…VLAL, and LLLL…LALG.

This sequence belongs to the KdpA family. The system is composed of three essential subunits: KdpA, KdpB and KdpC.

The protein localises to the cell inner membrane. Part of the high-affinity ATP-driven potassium transport (or Kdp) system, which catalyzes the hydrolysis of ATP coupled with the electrogenic transport of potassium into the cytoplasm. This subunit binds the periplasmic potassium ions and delivers the ions to the membrane domain of KdpB through an intramembrane tunnel. The protein is Potassium-transporting ATPase potassium-binding subunit of Pseudomonas entomophila (strain L48).